Consider the following 183-residue polypeptide: Dual specificity protein phosphatase 22-B (183 aa).

A Tyrosine-protein phosphatase domain is found at glycine 4 to glutamine 144. The active-site Phosphocysteine intermediate is the cysteine 88.

The protein belongs to the protein-tyrosine phosphatase family. Non-receptor class dual specificity subfamily.

The protein localises to the cytoplasm. Its subcellular location is the nucleus. The catalysed reaction is O-phospho-L-tyrosyl-[protein] + H2O = L-tyrosyl-[protein] + phosphate. The enzyme catalyses O-phospho-L-seryl-[protein] + H2O = L-seryl-[protein] + phosphate. It catalyses the reaction O-phospho-L-threonyl-[protein] + H2O = L-threonyl-[protein] + phosphate. Functionally, activates the Jnk signaling pathway. Dephosphorylates and deactivates p38 and stress-activated protein kinase/c-Jun N-terminal kinase (SAPK/JNK). This Danio rerio (Zebrafish) protein is Dual specificity protein phosphatase 22-B (dusp22b).